A 938-amino-acid chain; its full sequence is MLSKLLRLGEGRMVKRLKGVADYVNTLSDDIEKLSDAELRGKTDEFRARLAGGKEDLDDVMPEAFAVVREAAWRVLNQRHFDVQIMGGAALHFGNVAEMKTGEGKTLTSVLPAYLNALPGKGVHIVTVNEYLAKRDAEQMGRVHRFLGLDVDVILGTLTPDQRRAAYNADITYGTNWELGFDYLRDNMALRLEDCVQRGHHFAIVDEVDSILIDEARTPLIISGPADGGSNWYTEFARLAPLMKPDVHYEVDIKKRVVGINEAGVEFVEDQLGIENLYEAANSPLISYLNNAIKAKELFERDKHYIVRNGEVFIVDEFTGRMLVGRRYNEGLHQAIEAKEHVEIKAENQTVAQVTLQNYFRMYEKLAGMTGTAETEAAELHEIYKLGVVPIPTNRPMVRKDQSDLIYKTEEAKYIAVVDDVAERYEKGQPVLIGTTSVERSEFLSRQFEKRRIPHNVLNAKYHEQEAGIVAEAGRLGAITVATNMAGRGTDIVLGGNVDYLLDRRLRQRGLDPIETPEEYEQGWHEELPHIKAEVAAEAKDVIAAGGLYVLGTERHESRRIDNQLRGRSGRQGDPGESRFYLSLADELMRRFNGATLETLLTRLNLPDDVPIEAKMVSRAIKSAQTQVEQQNFDIRKEVLKYDEVMNQQRKVVYAERRRILEGENLAGQAHQILVDVITAYVDGATAEGYSEDWDLEKLWEGLRQLYPVGIDHHDLIDSDAVGEPGELTREELLQALIADAERAYAAREAEIEEIAGEGAMRQLERNVLLNVLDRKWREHLYEMDYLREGIGLRGLAQQRPEVEYAREGYDMFIAMLDGMKEESVGFLFNVQVERAPSAPTVAAQAAPAGLAAFAAAAAEQAQAQTGGVATKERPAVGGLRAKGIDDKAQPLTYTGPSEDGGVEVKRSGGGTPSTGGTRKERREAARQQKTGRHAKRR.

ATP-binding positions include Gln-84, Gly-102–Thr-106, and Asp-491. Residues Gln-865 to Arg-938 are disordered. The span at Thr-918 to Arg-927 shows a compositional bias: basic and acidic residues.

It belongs to the SecA family. In terms of assembly, monomer and homodimer. Part of the essential Sec protein translocation apparatus which comprises SecA, SecYEG and auxiliary proteins SecDF. Other proteins may also be involved.

It localises to the cell membrane. Its subcellular location is the cytoplasm. The catalysed reaction is ATP + H2O + cellular proteinSide 1 = ADP + phosphate + cellular proteinSide 2.. In terms of biological role, part of the Sec protein translocase complex. Interacts with the SecYEG preprotein conducting channel. Has a central role in coupling the hydrolysis of ATP to the transfer of proteins into and across the cell membrane, serving as an ATP-driven molecular motor driving the stepwise translocation of polypeptide chains across the membrane. In Mycolicibacterium vanbaalenii (strain DSM 7251 / JCM 13017 / BCRC 16820 / KCTC 9966 / NRRL B-24157 / PYR-1) (Mycobacterium vanbaalenii), this protein is Protein translocase subunit SecA 1.